Reading from the N-terminus, the 317-residue chain is Biotin synthase (317 aa).

Positions 42–260 (NRIQLSTLLS…IAVTRLCMPK (219 aa)) constitute a Radical SAM core domain. [4Fe-4S] cluster-binding residues include cysteine 57, cysteine 61, and cysteine 64. [2Fe-2S] cluster contacts are provided by cysteine 101, cysteine 132, cysteine 192, and arginine 264.

This sequence belongs to the radical SAM superfamily. Biotin synthase family. As to quaternary structure, homodimer. [4Fe-4S] cluster is required as a cofactor. Requires [2Fe-2S] cluster as cofactor.

The enzyme catalyses (4R,5S)-dethiobiotin + (sulfur carrier)-SH + 2 reduced [2Fe-2S]-[ferredoxin] + 2 S-adenosyl-L-methionine = (sulfur carrier)-H + biotin + 2 5'-deoxyadenosine + 2 L-methionine + 2 oxidized [2Fe-2S]-[ferredoxin]. Its pathway is cofactor biosynthesis; biotin biosynthesis; biotin from 7,8-diaminononanoate: step 2/2. Its function is as follows. Catalyzes the conversion of dethiobiotin (DTB) to biotin by the insertion of a sulfur atom into dethiobiotin via a radical-based mechanism. In Thiobacillus denitrificans (strain ATCC 25259 / T1), this protein is Biotin synthase.